We begin with the raw amino-acid sequence, 266 residues long: Putative carbamate hydrolase RutD (266 aa).

This sequence belongs to the AB hydrolase superfamily. Hydrolase RutD family.

It catalyses the reaction carbamate + 2 H(+) = NH4(+) + CO2. Involved in pyrimidine catabolism. May facilitate the hydrolysis of carbamate, a reaction that can also occur spontaneously. The polypeptide is Putative carbamate hydrolase RutD (Acinetobacter baylyi (strain ATCC 33305 / BD413 / ADP1)).